The following is a 711-amino-acid chain: MSRTIILIPVSTGVGLTSISLGLIHSLEQKGTKVAFMKPVSQPSTGEDKLDRTTSIIRTSTSLETAEPFMLSVAESLIGQNQSDVLLEKIVANHQQLTKNNDIVVVEGLIPTRKHGYANSINYEIAQALDAEIVLVAAPATETPTELKDRVEAAASLFGGKNNPNLLGVVVNKFNAPVDESGRTRPDLAEIFDSFQHNHISETEVNKLFAGSAIKLLACVPWNANLIATRAIDLVKHLGASIINEGEINRRIRGITFCARSLPNMVEHFRAGSLLVASADRPDVLVAAALAASNGIEIGGILLTGGYKIDAQINKLCRPTFEKAKLPIFRIEGNTWQTALSLQSFNLEVPVDDKERIENIKQYISQHFNADFINNLVADSSRLPRLSPPAFRFQLTELARAAKKRIVLPEGDEPRTIKAAVLCAERGIAECVLLADPASVQRVAEAQGVKLGKGITIINPADVRENYVDRLVELRKAKGMTETAAREQLEDTVVLGTMMLEANEVDGLVSGAVHTTANTIRPPMQIIKTAPGSSIVSSIFFMLLPDQVLVYGDCAVNPDPTAEQLAEIAIQSADSAKAFGIDPKVAMISYSTGTSGSGADVEKVKEATRIAKEKRPDLLIDGPLQYDAAVMEDVARSKAPNSPVAGKATVFVFPDLNTGNTTYKAVQRSADLVSIGPMLQGMRKPVNDLSRGALVDDIVYTIALTAIQATQ.

Residues 390–711 (AFRFQLTELA…IALTAIQATQ (322 aa)) are phosphate acetyltransferase.

It in the N-terminal section; belongs to the CobB/CobQ family. The protein in the C-terminal section; belongs to the phosphate acetyltransferase and butyryltransferase family. In terms of assembly, homohexamer.

The protein resides in the cytoplasm. The catalysed reaction is acetyl-CoA + phosphate = acetyl phosphate + CoA. It functions in the pathway metabolic intermediate biosynthesis; acetyl-CoA biosynthesis; acetyl-CoA from acetate: step 2/2. Its function is as follows. Involved in acetate metabolism. This is Phosphate acetyltransferase (pta) from Haemophilus influenzae (strain ATCC 51907 / DSM 11121 / KW20 / Rd).